The primary structure comprises 72 residues: Large ribosomal subunit protein bL31c (72 aa).

It belongs to the bacterial ribosomal protein bL31 family. Type A subfamily. As to quaternary structure, part of the 50S ribosomal subunit.

The protein resides in the plastid. Its subcellular location is the chloroplast. Functionally, binds the 23S rRNA. The protein is Large ribosomal subunit protein bL31c (rpl31) of Thalassiosira pseudonana (Marine diatom).